The following is a 120-amino-acid chain: Non-specific lipid-transfer protein (120 aa).

Residues 1 to 26 form the signal peptide; the sequence is MASSMSLKLACVVVLCMVVGAPLAQG. Disulfide bonds link C40-C56, C57-C102, and C77-C116.

It belongs to the plant LTP family.

In terms of biological role, plant non-specific lipid-transfer proteins transfer phospholipids as well as galactolipids across membranes. May play a role in wax or cutin deposition in the cell walls of expanding epidermal cells and certain secretory tissues. This chain is Non-specific lipid-transfer protein, found in Gossypium hirsutum (Upland cotton).